A 205-amino-acid polypeptide reads, in one-letter code: MTKRSEAKYKIDRRMGQNIWGRPKSPVNRREYGPGQHGQRRKGKLSDFGVQLRAKQKLKGYYANISERQFHAIYVEATRLKGDSGENLIGLLERRLDTVVYRAKFVATMFAARQFINHGHVKVNGKRVNISSYKVKVGDLIEVKESSKQLAFVLEASQLGERDTPDYVEVDHSKMTAKFIRVPHLSDVPFAVQMEPHLIVEFYSR.

The disordered stretch occupies residues 18 to 45 (NIWGRPKSPVNRREYGPGQHGQRRKGKL). The 64-residue stretch at 94 to 157 (RRLDTVVYRA…KQLAFVLEAS (64 aa)) folds into the S4 RNA-binding domain.

This sequence belongs to the universal ribosomal protein uS4 family. Part of the 30S ribosomal subunit. Contacts protein S5. The interaction surface between S4 and S5 is involved in control of translational fidelity.

Functionally, one of the primary rRNA binding proteins, it binds directly to 16S rRNA where it nucleates assembly of the body of the 30S subunit. Its function is as follows. With S5 and S12 plays an important role in translational accuracy. This is Small ribosomal subunit protein uS4 from Rhodopseudomonas palustris (strain BisA53).